Here is a 105-residue protein sequence, read N- to C-terminus: Small ribosomal subunit protein uS10 (105 aa).

This sequence belongs to the universal ribosomal protein uS10 family. As to quaternary structure, part of the 30S ribosomal subunit.

Its function is as follows. Involved in the binding of tRNA to the ribosomes. The polypeptide is Small ribosomal subunit protein uS10 (Trichormus variabilis (strain ATCC 29413 / PCC 7937) (Anabaena variabilis)).